Reading from the N-terminus, the 311-residue chain is Olfactory receptor 14I1 (311 aa).

The Extracellular portion of the chain corresponds to M1 to A26. An N-linked (GlcNAc...) asparagine glycan is attached at N3. Residues G27 to I47 traverse the membrane as a helical segment. Topologically, residues T48–T55 are cytoplasmic. Residues P56–V76 form a helical membrane-spanning segment. Over P77–Y92 the chain is Extracellular. The helical transmembrane segment at L93–L113 threads the bilayer. Cysteines 95 and 188 form a disulfide. The Cytoplasmic portion of the chain corresponds to T114–Q141. A helical transmembrane segment spans residues M142–F162. The Extracellular portion of the chain corresponds to R163–E189. Residues V190–I210 form a helical membrane-spanning segment. Over L211–P241 the chain is Cytoplasmic. The chain crosses the membrane as a helical span at residues Q242–A262. Over K263 to D269 the chain is Extracellular. The chain crosses the membrane as a helical span at residues L270–L290. The Cytoplasmic portion of the chain corresponds to R291–K311.

The protein belongs to the G-protein coupled receptor 1 family.

The protein resides in the cell membrane. In terms of biological role, odorant receptor. This is Olfactory receptor 14I1 (OR14I1) from Homo sapiens (Human).